The primary structure comprises 675 residues: Potassium-transporting ATPase ATP-binding subunit (675 aa).

A run of 4 helical transmembrane segments spans residues 34-54 (IMFV…FPDI), 65-85 (LITI…SEAF), 216-236 (IALF…IVTL), and 245-265 (LILP…TTIG). The active-site 4-aspartylphosphate intermediate is the aspartate 304. ATP-binding positions include aspartate 341, glutamate 345, 372-379 (FTAETRMS), and lysine 390. 2 residues coordinate Mg(2+): aspartate 513 and aspartate 517. 3 consecutive transmembrane segments (helical) span residues 569–591 (ALTT…ALMM), 611–631 (AIIS…PIAM), and 644–664 (IFIN…FLGI).

It belongs to the cation transport ATPase (P-type) (TC 3.A.3) family. Type IA subfamily. The system is composed of three essential subunits: KdpA, KdpB and KdpC.

The protein resides in the cell membrane. The enzyme catalyses K(+)(out) + ATP + H2O = K(+)(in) + ADP + phosphate + H(+). Part of the high-affinity ATP-driven potassium transport (or Kdp) system, which catalyzes the hydrolysis of ATP coupled with the electrogenic transport of potassium into the cytoplasm. This subunit is responsible for energy coupling to the transport system and for the release of the potassium ions to the cytoplasm. This Staphylococcus aureus (strain bovine RF122 / ET3-1) protein is Potassium-transporting ATPase ATP-binding subunit.